The sequence spans 163 residues: Large ribosomal subunit protein eL24y (163 aa).

Basic and acidic residues predominate over residues 119–133; that stretch reads IKKTKDEKKAKKVEF. The segment at 119–163 is disordered; that stretch reads IKKTKDEKKAKKVEFASKQQKVKANFPKAAAASKGPKVGGGGGKR.

The protein belongs to the eukaryotic ribosomal protein eL24 family. In terms of assembly, interacts with REIL1 and REIL2. Component of the large ribosomal subunit. As to expression, ubiquitous.

Its subcellular location is the cytoplasm. It localises to the nucleus. The protein localises to the nucleolus. The protein resides in the nucleoplasm. Its function is as follows. Might have an extraribosomal function in reinitiation of translation of ETTIN and MONOPTEROS genes that are involved in the auxin-mediated gynoecium patterning. Essential in leaf polarity establishment, probably having a role for translation in leaf dorsoventral patterning to specify leaf adaxial identity. This is Large ribosomal subunit protein eL24y from Arabidopsis thaliana (Mouse-ear cress).